The following is a 1163-amino-acid chain: Zinc finger protein 516 (1163 aa).

The segment covering 1–13 (MDRNREAEMELRR) has biased composition (basic and acidic residues). The segment at 1–26 (MDRNREAEMELRRGPSPTRAGRGHEV) is disordered. The interval 1-431 (MDRNREAEME…ATRGKVAEPA (431 aa)) is mediates promoter DNA-binding and activation of transcription. 7 consecutive C2H2-type zinc fingers follow at residues 34–56 (HTCC…MRKH), 62–84 (YKCP…IRSH), 174–197 (VQCS…HQAH), 200–223 (FKCR…ERDH), 248–270 (FPCE…MKKH), 276–298 (HGCH…MKAH), and 335–357 (EVCA…NAIH). A compositionally biased stretch (basic and acidic residues) spans 460 to 469 (SQEKRKREQD). 3 disordered regions span residues 460–512 (SQEK…TGQG), 533–667 (HSRV…QEQH), and 679–730 (HPKQ…APDL). Over residues 496 to 507 (RSAARPNRRAAA) the composition is skewed to low complexity. A C2H2-type 8 zinc finger spans residues 515–537 (SECFECGKIFRTYHQMVLHSRVH). Basic and acidic residues predominate over residues 542 to 552 (RERDSDGDRAA). Over residues 561 to 572 (EGDSASQPSSPG) the composition is skewed to polar residues. The segment covering 588-598 (EAAEDSGEEGA) has biased composition (acidic residues). Over residues 615–625 (EVTSTELSSGD) the composition is skewed to polar residues. The span at 626–641 (QSHKMGDNASERDTGE) shows a compositional bias: basic and acidic residues. A Glycyl lysine isopeptide (Lys-Gly) (interchain with G-Cter in SUMO2) cross-link involves residue Lys643. Residues 656–667 (SSRETSRRQEQH) show a composition bias toward basic and acidic residues. Residue Lys681 forms a Glycyl lysine isopeptide (Lys-Gly) (interchain with G-Cter in SUMO2) linkage. A compositionally biased stretch (basic and acidic residues) spans 706–720 (PAEKLSDLHNKEHSG). The C2H2-type 9; atypical zinc-finger motif lies at 760 to 783 (HPCPYCSHKTYYPEVLWMHKRIWH). The segment at 838-1007 (TQVPGGMPGS…PPREPPSKAA (170 aa)) is disordered. Positions 840 to 857 (VPGGMPGSKSGSSPLGVV) are enriched in low complexity. Glycyl lysine isopeptide (Lys-Gly) (interchain with G-Cter in SUMO2) cross-links involve residues Lys1043 and Lys1062. The C2H2-type 10 zinc finger occupies 1098-1120 (FVCIECGKSFHQPGHLRAHMRAH). The segment at 1126–1163 (SDGPRGSEVHTTSADAPKQGRDHSNTGTVQTVPLRKGT) is disordered.

This sequence belongs to the krueppel C2H2-type zinc-finger protein family. As to quaternary structure, interacts with PRDM16; the interaction is direct and may play a role in the transcription of brown adipose tissue-specific genes. Interacts with PWWP2B. Interacts with HDAC1; this interaction is enhanced in the presence of PWWP2B.

Its subcellular location is the nucleus. Functionally, transcriptional regulator that binds to the promoter and activates the transcription of genes promoting brown adipose tissue (BAT) differentiation. Among brown adipose tissue-specific genes, binds the proximal region of the promoter of the UCP1 gene to activate its transcription and thereby regulate thermogenesis. May also play a role in the cellular response to replication stress. The sequence is that of Zinc finger protein 516 from Homo sapiens (Human).